A 375-amino-acid chain; its full sequence is MKYAAVLTTVAALASRALGAGVSGTAEGFASSATGGGSATAVYPTTTDELVSYLGDDEARVIVLSQTFDFTNTEGTTTETGCAPWGTGSACQVAINKDDWCTNYESSAPSTSVTYDNAGSLGITVNSNKSLIGEGTKGVIKGKGLRIVNGVENVIIQNIAVTDINPKYVWGGDAITINQADLVWIDHVTTARIGRQHYVLGTEADNRVTLSNNYIDGESDYSATCDGHHYWNVYLDGSSDKVTMKGNYFYKTSGRAPKVQGNTYLHAVNNYWNDNSNHAFEIGSGGYVLAEGNTFADVTAAVEDSSFEGELFSSSSDADTCSSYIGRACKANSFTNSGDLSGTTVDVLSKFKGETVATADTASTAPASNAGQGNL.

A signal peptide spans 1-19; the sequence is MKYAAVLTTVAALASRALG. Intrachain disulfides connect Cys82–Cys101 and Cys91–Cys225. N-linked (GlcNAc...) asparagine glycosylation occurs at Asn128. Arg255 is a catalytic residue. A disulfide bridge connects residues Cys321 and Cys329.

It belongs to the polysaccharide lyase 1 family.

The protein resides in the secreted. It carries out the reaction Eliminative cleavage of (1-&gt;4)-alpha-D-galacturonan methyl ester to give oligosaccharides with 4-deoxy-6-O-methyl-alpha-D-galact-4-enuronosyl groups at their non-reducing ends.. Functionally, pectinolytic enzymes consist of four classes of enzymes: pectin lyase, polygalacturonase, pectin methylesterase and rhamnogalacturonase. Among pectinolytic enzymes, pectin lyase is the most important in depolymerization of pectin, since it cleaves internal glycosidic bonds of highly methylated pectins. The sequence is that of Probable pectin lyase D (pelD) from Aspergillus flavus (strain ATCC 200026 / FGSC A1120 / IAM 13836 / NRRL 3357 / JCM 12722 / SRRC 167).